The chain runs to 609 residues: UvrABC system protein C (609 aa).

In terms of domain architecture, GIY-YIG spans Ser-16–Val-94. A UVR domain is found at Lys-203–Val-238.

It belongs to the UvrC family. In terms of assembly, interacts with UvrB in an incision complex.

It localises to the cytoplasm. In terms of biological role, the UvrABC repair system catalyzes the recognition and processing of DNA lesions. UvrC both incises the 5' and 3' sides of the lesion. The N-terminal half is responsible for the 3' incision and the C-terminal half is responsible for the 5' incision. This chain is UvrABC system protein C, found in Shewanella oneidensis (strain ATCC 700550 / JCM 31522 / CIP 106686 / LMG 19005 / NCIMB 14063 / MR-1).